Reading from the N-terminus, the 313-residue chain is Syndecan-1 (313 aa).

Positions 1 to 22 (MRRAALWLWLCALALRLQPALP) are cleaved as a signal peptide. The Extracellular portion of the chain corresponds to 23–257 (QIVTANVPPE…GLLDRKEVLG (235 aa)). Disordered regions lie at residues 27 to 58 (ANVP…MTLS) and 95 to 186 (AGEK…VEDG). Residues 32 to 42 (EDQDGSGDDSD) are compositionally biased toward acidic residues. The O-linked (Xyl...) (chondroitin sulfate) serine glycan is linked to serine 37. N-linked (GlcNAc...) asparagine glycosylation is present at asparagine 43. O-linked (Xyl...) (heparan sulfate) serine glycans are attached at residues serine 45 and serine 47. Over residues 97–129 (EKPEEGEPVAHVEAEPDFTARDKEKEATTRPRE) the composition is skewed to basic and acidic residues. The segment covering 135 to 154 (VTQQASTAARATTAQASVTS) has biased composition (low complexity). O-linked (Xyl...) (chondroitin sulfate) serine glycans are attached at residues serine 209 and serine 219. Residues 258–278 (GVIAGGLVGLIFAVCLVAFML) form a helical membrane-spanning segment. Residues 279-313 (YRMKKKDEGSYSLEEPKQANGGAYQKPTKQEEFYA) are Cytoplasmic-facing. A compositionally biased stretch (basic and acidic residues) spans 286 to 295 (EGSYSLEEPK). The tract at residues 286-313 (EGSYSLEEPKQANGGAYQKPTKQEEFYA) is disordered. At serine 288 the chain carries Phosphoserine.

The protein belongs to the syndecan proteoglycan family. In terms of assembly, interacts with CDCP1. Interacts (via C-terminus) with TIAM1 (via PDZ domain). Interacts with MDK. In terms of processing, shedding is enhanced by a number of factors such as heparanase, thrombin or EGF. Also by stress and wound healing. PMA-mediated shedding is inhibited by TIMP3.

The protein localises to the membrane. Its subcellular location is the secreted. It localises to the extracellular exosome. In terms of biological role, cell surface proteoglycan that contains both heparan sulfate and chondroitin sulfate and that links the cytoskeleton to the interstitial matrix. Regulates exosome biogenesis in concert with SDCBP and PDCD6IP. Able to induce its own expression in dental mesenchymal cells and also in the neighboring dental epithelial cells via an MSX1-mediated pathway. This chain is Syndecan-1, found in Rattus norvegicus (Rat).